Reading from the N-terminus, the 424-residue chain is Enolase (424 aa).

(2R)-2-phosphoglycerate is bound at residue Gln162. The active-site Proton donor is Glu204. Mg(2+) is bound by residues Asp241, Glu284, and Asp311. Residues Lys336, Arg365, Ser366, and Lys387 each coordinate (2R)-2-phosphoglycerate. Lys336 acts as the Proton acceptor in catalysis.

It belongs to the enolase family. It depends on Mg(2+) as a cofactor.

Its subcellular location is the cytoplasm. It localises to the secreted. It is found in the cell surface. The catalysed reaction is (2R)-2-phosphoglycerate = phosphoenolpyruvate + H2O. The protein operates within carbohydrate degradation; glycolysis; pyruvate from D-glyceraldehyde 3-phosphate: step 4/5. Functionally, catalyzes the reversible conversion of 2-phosphoglycerate (2-PG) into phosphoenolpyruvate (PEP). It is essential for the degradation of carbohydrates via glycolysis. This chain is Enolase, found in Rhizobium etli (strain ATCC 51251 / DSM 11541 / JCM 21823 / NBRC 15573 / CFN 42).